The primary structure comprises 256 residues: Thiazole synthase (256 aa).

The Schiff-base intermediate with DXP role is filled by Lys96. Residues Gly157, Ala183–Gly184, and Asn205–Thr206 each bind 1-deoxy-D-xylulose 5-phosphate.

The protein belongs to the ThiG family. Homotetramer. Forms heterodimers with either ThiH or ThiS.

The protein localises to the cytoplasm. It carries out the reaction [ThiS sulfur-carrier protein]-C-terminal-Gly-aminoethanethioate + 2-iminoacetate + 1-deoxy-D-xylulose 5-phosphate = [ThiS sulfur-carrier protein]-C-terminal Gly-Gly + 2-[(2R,5Z)-2-carboxy-4-methylthiazol-5(2H)-ylidene]ethyl phosphate + 2 H2O + H(+). It functions in the pathway cofactor biosynthesis; thiamine diphosphate biosynthesis. Functionally, catalyzes the rearrangement of 1-deoxy-D-xylulose 5-phosphate (DXP) to produce the thiazole phosphate moiety of thiamine. Sulfur is provided by the thiocarboxylate moiety of the carrier protein ThiS. In vitro, sulfur can be provided by H(2)S. The protein is Thiazole synthase of Bacillus anthracis.